Here is a 536-residue protein sequence, read N- to C-terminus: MEELGSRNPSIGLESIGFSDLSVVRYNFEAAQLYEEALAHGEAELTAHGALCARTGQHTGRSPKDKYVVRDANTADQIWWDNNSAISPENFDRLRQDMLAHAKGMSLYVQDLVGGADPENALPTRVVTEFAWHSLFIRNLLIRPEREALSSFQPMLTIIDLPSFKASPERHGCRSETVIACDLTNGLVLIGGTSYAGEMKKSVFTVLNYLLPRKSVMPMHCSANVGPAGDTAIFFGLSGTGKTTLSADPNRTLIGDDEHGWGEKGVFNFEGGCYAKAIRLSEAAEPEIFATTQRFGTVMENVVLDERRMPDFEDGSLTENTRCAYPLHFIPNASKTGTAPQPRTIIMLTADAFGVLPPIAKLTPEQAMYHFLSGYTAKVAGTEKGVTEPEATFSTCFGAPFMPRHPSEYGNLLKELIARNGVTCWLVNTGWTGGAYGTGSRMPIKVTRALLSAALDGSLNSASFRSDANFGFAVPVSVPGVESRILDPRSTWADGAAYDAQARRLVDMFIANFAKFESHVDGSVRDAAPGARIAAE.

Substrate contacts are provided by Arg-61, Tyr-195, and Lys-201. ATP-binding positions include Lys-201, His-220, and 236-244 (GLSGTGKTT). The Mn(2+) site is built by Lys-201 and His-220. Residue Asp-257 coordinates Mn(2+). ATP-binding residues include Glu-285, Arg-322, and Thr-447. Substrate is bound at residue Arg-322.

The protein belongs to the phosphoenolpyruvate carboxykinase (ATP) family. Mn(2+) serves as cofactor.

It is found in the cytoplasm. It carries out the reaction oxaloacetate + ATP = phosphoenolpyruvate + ADP + CO2. It participates in carbohydrate biosynthesis; gluconeogenesis. Functionally, involved in the gluconeogenesis. Catalyzes the conversion of oxaloacetate (OAA) to phosphoenolpyruvate (PEP) through direct phosphoryl transfer between the nucleoside triphosphate and OAA. The sequence is that of Phosphoenolpyruvate carboxykinase (ATP) from Sinorhizobium medicae (strain WSM419) (Ensifer medicae).